The primary structure comprises 682 residues: DNA-directed RNA polymerase subunit beta' (682 aa).

4 residues coordinate Zn(2+): Cys69, Cys71, Cys87, and Cys90. Mg(2+)-binding residues include Asp489, Asp491, and Asp493.

It belongs to the RNA polymerase beta' chain family. RpoC1 subfamily. In plastids the minimal PEP RNA polymerase catalytic core is composed of four subunits: alpha, beta, beta', and beta''. When a (nuclear-encoded) sigma factor is associated with the core the holoenzyme is formed, which can initiate transcription. The cofactor is Mg(2+). Zn(2+) serves as cofactor.

It is found in the plastid. The protein localises to the chloroplast. The enzyme catalyses RNA(n) + a ribonucleoside 5'-triphosphate = RNA(n+1) + diphosphate. Functionally, DNA-dependent RNA polymerase catalyzes the transcription of DNA into RNA using the four ribonucleoside triphosphates as substrates. This Platanus occidentalis (Sycamore) protein is DNA-directed RNA polymerase subunit beta'.